The chain runs to 932 residues: UPF0182 protein Amet_0022 (932 aa).

7 consecutive transmembrane segments (helical) span residues 14-34, 60-80, 104-124, 166-186, 208-228, 256-276, and 286-306; these read VIIG…SEIL, LQIG…YLIG, ILIL…AGSL, TSIL…MFLI, LLQI…LVLA, VTLW…TGVV, and LLLI…VISL.

This sequence belongs to the UPF0182 family.

Its subcellular location is the cell membrane. The sequence is that of UPF0182 protein Amet_0022 from Alkaliphilus metalliredigens (strain QYMF).